A 37-amino-acid chain; its full sequence is MKVRASVRKICINCRLIRRKRKIMVICSNPKHKQRQG.

It belongs to the bacterial ribosomal protein bL36 family.

It is found in the plastid. The protein resides in the chloroplast. The protein is Large ribosomal subunit protein bL36c of Pleurastrum terricola (Filamentous green alga).